Consider the following 198-residue polypeptide: Holliday junction branch migration complex subunit RuvA (198 aa).

Residues 1 to 61 (MYEYFEGIIQ…DNDQTLYGFE (61 aa)) are domain I. The domain II stretch occupies residues 62–140 (GAADKRTFNQ…TDGQPAAAAI (79 aa)). The tract at residues 141 to 145 (APVAS) is flexible linker. Residues 146–198 (DVDSELADALAALVALGYPQRTVDGLTDTLKAFSAKTTDAYLREGLRLLSGKA) form a domain III region.

This sequence belongs to the RuvA family. Homotetramer. Forms an RuvA(8)-RuvB(12)-Holliday junction (HJ) complex. HJ DNA is sandwiched between 2 RuvA tetramers; dsDNA enters through RuvA and exits via RuvB. An RuvB hexamer assembles on each DNA strand where it exits the tetramer. Each RuvB hexamer is contacted by two RuvA subunits (via domain III) on 2 adjacent RuvB subunits; this complex drives branch migration. In the full resolvosome a probable DNA-RuvA(4)-RuvB(12)-RuvC(2) complex forms which resolves the HJ.

The protein resides in the cytoplasm. Its function is as follows. The RuvA-RuvB-RuvC complex processes Holliday junction (HJ) DNA during genetic recombination and DNA repair, while the RuvA-RuvB complex plays an important role in the rescue of blocked DNA replication forks via replication fork reversal (RFR). RuvA specifically binds to HJ cruciform DNA, conferring on it an open structure. The RuvB hexamer acts as an ATP-dependent pump, pulling dsDNA into and through the RuvAB complex. HJ branch migration allows RuvC to scan DNA until it finds its consensus sequence, where it cleaves and resolves the cruciform DNA. This is Holliday junction branch migration complex subunit RuvA from Lacticaseibacillus casei (strain BL23) (Lactobacillus casei).